The primary structure comprises 144 residues: Neuritin-B (144 aa).

Positions 1 to 27 (MGLKLSGRYIFLVLAVHLAYLLQAVKA) are cleaved as a signal peptide. Residue Ser114 is the site of GPI-anchor amidated serine attachment. Positions 115-144 (TGAPGPRLLFPAFLPLLIVFLSALLNWVLQ) are cleaved as a propeptide — removed in mature form.

Belongs to the neuritin family.

The protein resides in the cell membrane. Its function is as follows. Modulates postsynaptic dendritic arbor elaboration and synaptic maturation. In Xenopus laevis (African clawed frog), this protein is Neuritin-B (nrn1-b).